The primary structure comprises 237 residues: Probable transcriptional regulatory protein Fjoh_2560 (237 aa).

The protein belongs to the TACO1 family.

The protein resides in the cytoplasm. The protein is Probable transcriptional regulatory protein Fjoh_2560 of Flavobacterium johnsoniae (strain ATCC 17061 / DSM 2064 / JCM 8514 / BCRC 14874 / CCUG 350202 / NBRC 14942 / NCIMB 11054 / UW101) (Cytophaga johnsonae).